Reading from the N-terminus, the 306-residue chain is UDP-3-O-acyl-N-acetylglucosamine deacetylase (306 aa).

3 residues coordinate Zn(2+): His79, His239, and Asp243. The Proton donor role is filled by His266.

This sequence belongs to the LpxC family. The cofactor is Zn(2+).

The enzyme catalyses a UDP-3-O-[(3R)-3-hydroxyacyl]-N-acetyl-alpha-D-glucosamine + H2O = a UDP-3-O-[(3R)-3-hydroxyacyl]-alpha-D-glucosamine + acetate. It participates in glycolipid biosynthesis; lipid IV(A) biosynthesis; lipid IV(A) from (3R)-3-hydroxytetradecanoyl-[acyl-carrier-protein] and UDP-N-acetyl-alpha-D-glucosamine: step 2/6. In terms of biological role, catalyzes the hydrolysis of UDP-3-O-myristoyl-N-acetylglucosamine to form UDP-3-O-myristoylglucosamine and acetate, the committed step in lipid A biosynthesis. The polypeptide is UDP-3-O-acyl-N-acetylglucosamine deacetylase (Glaesserella parasuis serovar 5 (strain SH0165) (Haemophilus parasuis)).